Reading from the N-terminus, the 382-residue chain is D-galactonate dehydratase (382 aa).

A Mg(2+)-binding site is contributed by aspartate 183. Histidine 185 serves as the catalytic Proton donor. Glutamate 209 and glutamate 235 together coordinate Mg(2+). Histidine 285 acts as the Proton acceptor in catalysis.

The protein belongs to the mandelate racemase/muconate lactonizing enzyme family. GalD subfamily. The cofactor is Mg(2+).

It catalyses the reaction D-galactonate = 2-dehydro-3-deoxy-D-galactonate + H2O. The protein operates within carbohydrate acid metabolism; D-galactonate degradation; D-glyceraldehyde 3-phosphate and pyruvate from D-galactonate: step 1/3. In terms of biological role, catalyzes the dehydration of D-galactonate to 2-keto-3-deoxy-D-galactonate. The polypeptide is D-galactonate dehydratase (Verminephrobacter eiseniae (strain EF01-2)).